A 194-amino-acid chain; its full sequence is MDPKDRKKIQFSVPAPPSQLDPRQVEMIRRRRPTPAMLFRVSEHSSPEEEASPHQRTSGEGHHPKSKRPNPCAYTPPSLKAVQHLQTISNLSENQASEEEDELGELRELGYPQEDDEEDEDEEEDEEEDSQAEVLKGSRGTVGQKPTCGRGLEGPWERPPPLDEPQRDGNSEDQVEGRATLSEPGEEPQHPSPP.

Methionine 1 carries the post-translational modification N-acetylmethionine. Residues 1–194 form a disordered region; the sequence is MDPKDRKKIQ…GEEPQHPSPP (194 aa). The residue at position 34 (threonine 34) is a Phosphothreonine; by PKA. A compositionally biased stretch (basic and acidic residues) spans 41 to 63; sequence VSEHSSPEEEASPHQRTSGEGHH. 2 positions are modified to phosphoserine: serine 45 and serine 46. Threonine 75 carries the post-translational modification Phosphothreonine. Polar residues predominate over residues 84–95; sequence HLQTISNLSENQ. A phosphoserine mark is found at serine 97 and serine 130. Over residues 113–131 the composition is skewed to acidic residues; that stretch reads QEDDEEDEDEEEDEEEDSQ. The segment covering 160 to 170 has biased composition (basic and acidic residues); that stretch reads PPLDEPQRDGN. Position 192 is a phosphoserine (serine 192).

This sequence belongs to the protein phosphatase inhibitor 1 family. Post-translationally, dopamine- and cyclic AMP-regulated neuronal phosphoprotein. Phosphorylation of Thr-34 is required for activity.

Its subcellular location is the cytoplasm. Its function is as follows. Inhibitor of protein-phosphatase 1. The polypeptide is Protein phosphatase 1 regulatory subunit 1B (Ppp1r1b) (Mus musculus (Mouse)).